The sequence spans 1352 residues: Alpha-protein kinase 1 (1352 aa).

The Arf-GAP domain maps to 7–127; that stretch reads DPNYGLLRSL…RWTSSLSTSD (121 aa). A C4-type zinc finger spans residues 25–48; the sequence is CAECNSANVPYVCIKLGVFICPTC. Disordered regions lie at residues 123-164, 219-380, 424-445, 457-484, 503-560, and 619-658; these read LSTS…NNNN, TQSQ…PQHH, QQQQ…NSEP, HNHH…GNNS, FVEE…GGVS, and IINN…TNQN. Residues 237–246 show a composition bias toward polar residues; that stretch reads GFSPFNSPRS. Low complexity-rich tracts occupy residues 268-287 and 298-318; these read NNSN…NNGN and NNNN…NNNN. 2 stretches are compositionally biased toward polar residues: residues 329–352 and 359–379; these read KTFS…SGNS and HPTQ…SPQH. Residues 393 to 429 adopt a coiled-coil conformation; the sequence is TTQQQLQQQQLQLQQQLQQQLQQQQQQQQQQQQQQQS. Composition is skewed to basic residues over residues 458 to 470 and 510 to 523; these read NHHH…HHKQ and HQHP…RHHS. Residues 619–636 show a composition bias toward low complexity; it reads IINNQNNQNNNNNNNTNN. A coiled-coil region spans residues 689 to 781; the sequence is YIQQQQQQQQ…QQQQQQHINL (93 aa). 2 disordered regions span residues 786–863 and 901–979; these read PLQS…TDED and TSPI…PDAR. Over residues 799-812 the composition is skewed to polar residues; that stretch reads PQHSSSQYMNQQGY. Residues 821–859 are compositionally biased toward low complexity; sequence QPQSPQQIQPQPLQQQIFQQVQQQQPQIPQQSPQPLQSS. Positions 906-915 are enriched in pro residues; that stretch reads QQPPQPPQPV. A compositionally biased stretch (low complexity) spans 931–965; that stretch reads QQQNGPTVPQQQQQQQQQQQQQQQQQQQQQQQQQP. Residues 990 to 1194 enclose the Alpha-type protein kinase domain; sequence RFDAKLGKWV…ICHYLGLSSV (205 aa). 1164–1169 contacts ATP; that stretch reads GKGNLG. Disordered stretches follow at residues 1198-1234 and 1279-1352; these read PAND…SFNF and QQQQ…KLVS. The stretch at 1241-1320 forms a coiled coil; sequence HVLEQLNQQQ…QQQQQQQQNG (80 aa). Over residues 1279–1319 the composition is skewed to low complexity; it reads QQQQQQQQQQQQQQQQNQQQNQQQNQQQQQQQQQQQQQQQN. Residues 1321–1332 are compositionally biased toward pro residues; the sequence is HPPPQTPLPPTP. Positions 1334–1352 are enriched in basic and acidic residues; that stretch reads QKDKPKIEVFGDILRKLVS.

This sequence belongs to the protein kinase superfamily. Alpha-type protein kinase family. ALPK subfamily.

The polypeptide is Alpha-protein kinase 1 (ak1) (Dictyostelium discoideum (Social amoeba)).